Reading from the N-terminus, the 104-residue chain is Portal vertex auxiliary protein (104 aa).

An intrachain disulfide couples Cys25 to Cys88.

As to quaternary structure, homodimer; disulfide-linked. Interacts with the major capsid protein.

It is found in the virion. The sequence is that of Portal vertex auxiliary protein from Bacteroides intestinalis (Bacteroides phage PhiCrAss001).